We begin with the raw amino-acid sequence, 145 residues long: MAVANTNSPDQTLPVLVCFSGGEEIFRKNVVEGPFADEYKFAHEIKVSDSEGQHWVNFSGGMCVIDQGEVFNKKQPKLTDNLSCYSGAKKVVTFDVYGEETTIDEYVEGRTFLAKASGSVIASNSIHQYLLFGSGTCIGEEIGED.

This is an uncharacterized protein from Synechocystis sp. (strain ATCC 27184 / PCC 6803 / Kazusa).